The sequence spans 126 residues: Holo-[acyl-carrier-protein] synthase (126 aa).

Residues Asp-8 and Glu-57 each contribute to the Mg(2+) site.

It belongs to the P-Pant transferase superfamily. AcpS family. The cofactor is Mg(2+).

It is found in the cytoplasm. It catalyses the reaction apo-[ACP] + CoA = holo-[ACP] + adenosine 3',5'-bisphosphate + H(+). Its function is as follows. Transfers the 4'-phosphopantetheine moiety from coenzyme A to a Ser of acyl-carrier-protein. This is Holo-[acyl-carrier-protein] synthase from Leptospira interrogans serogroup Icterohaemorrhagiae serovar copenhageni (strain Fiocruz L1-130).